Reading from the N-terminus, the 932-residue chain is RNA-binding protein 12 (932 aa).

Residues 97–116 (IPPANASRSGPPPSSGMSGR) are disordered. Low complexity predominate over residues 98–116 (PPANASRSGPPPSSGMSGR). One can recognise an RRM 1 domain in the interval 304-379 (LYVSVHGMPF…RYVEVSPATE (76 aa)). Residues serine 352 and serine 375 each carry the phosphoserine modification. The segment at 393–424 (QNMGPSGQSHPPPQTLPRSKSPSGQKRSRSRS) is disordered. Residues 408–417 (LPRSKSPSGQ) are compositionally biased toward polar residues. Phosphoserine occurs at positions 420, 422, and 424. Residues 430–507 (FCVYLKGLPF…RFIQVHPITK (78 aa)) enclose the RRM 2 domain. Serine 525 bears the Phosphoserine mark. The segment covering 717–734 (NGPPFNFPGNFGGSNAFG) has biased composition (low complexity). A disordered region spans residues 717-853 (NGPPFNFPGN…PGFASSSGKP (137 aa)). Over residues 783–811 (SGFGGGPQNFGNGPGSLGGPPGFGSGPPG) the composition is skewed to gly residues. Residues 824-836 (AFGPGPGPGPGPG) are compositionally biased toward pro residues. One can recognise an RRM 3 domain in the interval 856–932 (TVIKVQNMPF…GSRKVKLVLG (77 aa)).

The protein localises to the nucleus. This is RNA-binding protein 12 (RBM12) from Macaca mulatta (Rhesus macaque).